Consider the following 390-residue polypeptide: L-serine phosphate decarboxylase Cj1436c (390 aa).

Lysine 243 is subject to N6-(pyridoxal phosphate)lysine.

Belongs to the class-I pyridoxal-phosphate-dependent aminotransferase family. The cofactor is pyridoxal 5'-phosphate.

The catalysed reaction is O-phospho-L-serine + H(+) = phosphoethanolamine + CO2. Its pathway is capsule biogenesis; capsule polysaccharide biosynthesis. Functionally, pyridoxal phosphate (PLP)-dependent decarboxylase involved in the biosynthesis of amidated D-glucuronic acid structures found on the capsular polysaccharide (CPS) of C.jejuni. Catalyzes the decarboxylation of L-serine phosphate to ethanolamine phosphate. Less active with L-threonine phosphate. No activity with L-serine, L-threonine, L-aspartate or L-glutamate. The sequence is that of L-serine phosphate decarboxylase Cj1436c from Campylobacter jejuni subsp. jejuni serotype O:2 (strain ATCC 700819 / NCTC 11168).